Here is a 242-residue protein sequence, read N- to C-terminus: tRNA (guanine-N(1)-)-methyltransferase (242 aa).

S-adenosyl-L-methionine-binding positions include glycine 109 and 129–134; that span reads LGDFVL.

It belongs to the RNA methyltransferase TrmD family. Homodimer.

The protein localises to the cytoplasm. It carries out the reaction guanosine(37) in tRNA + S-adenosyl-L-methionine = N(1)-methylguanosine(37) in tRNA + S-adenosyl-L-homocysteine + H(+). In terms of biological role, specifically methylates guanosine-37 in various tRNAs. This Exiguobacterium sibiricum (strain DSM 17290 / CCUG 55495 / CIP 109462 / JCM 13490 / 255-15) protein is tRNA (guanine-N(1)-)-methyltransferase.